The following is a 577-amino-acid chain: Isocitrate dehydrogenase kinase/phosphatase (577 aa).

Residues 318–324 and Lys-339 contribute to the ATP site; that span reads APGVRGM. Asp-374 is a catalytic residue.

The protein belongs to the AceK family.

Its subcellular location is the cytoplasm. It carries out the reaction L-seryl-[isocitrate dehydrogenase] + ATP = O-phospho-L-seryl-[isocitrate dehydrogenase] + ADP + H(+). Bifunctional enzyme which can phosphorylate or dephosphorylate isocitrate dehydrogenase (IDH) on a specific serine residue. This is a regulatory mechanism which enables bacteria to bypass the Krebs cycle via the glyoxylate shunt in response to the source of carbon. When bacteria are grown on glucose, IDH is fully active and unphosphorylated, but when grown on acetate or ethanol, the activity of IDH declines drastically concomitant with its phosphorylation. The chain is Isocitrate dehydrogenase kinase/phosphatase from Pseudomonas aeruginosa (strain UCBPP-PA14).